The primary structure comprises 1172 residues: Carbamoyl phosphate synthase arginine-specific large chain, chloroplastic (1172 aa).

Residues 1-10 are compositionally biased toward polar residues; it reads MATSLSSAPT. Residues 1–37 form a disordered region; it reads MATSLSSAPTQLRPSPSPSHHRLLHRSSLLPFPRRHH. The N-terminal 50 residues, 1-50, are a transit peptide targeting the chloroplast; sequence MATSLSSAPTQLRPSPSPSHHRLLHRSSLLPFPRRHHHRRRRCGALSIAR. The segment at 72–473 is carboxyphosphate synthetic domain; that stretch reads GRLAGVRKIM…SFQKAVRSLE (402 aa). 12 residues coordinate ATP: Arg-199, Arg-240, Gly-246, Gly-247, Lys-279, Leu-281, Glu-286, Gly-312, Val-313, His-314, Gln-356, and Glu-370. Residues 203–399 enclose the ATP-grasp 1 domain; that stretch reads KQAMDRIGLK…IAKMAAKLSV (197 aa). The Mg(2+) site is built by Gln-356, Glu-370, and Asn-372. The interval 474–623 is oligomerization domain; it reads TGFAGWGCAP…YSSYEYECES (150 aa). Residues 624 to 1019 are carbamoyl phosphate synthetic domain; it reads VPTNKKKVLI…GAFAKAQIAA (396 aa). In terms of domain architecture, ATP-grasp 2 spans 761–954; it reads NAILEELGIE…LAKYASLVMS (194 aa). Residues Arg-797, Lys-836, Leu-838, Glu-843, Gly-869, Ile-870, His-871, Ser-872, Gln-912, and Glu-925 each coordinate ATP. Mg(2+) contacts are provided by Gln-912, Glu-925, and Asn-927. The interval 1020–1172 is allosteric domain; sequence GQKLPLNGTV…QNLQAAQSAS (153 aa). The MGS-like domain maps to 1021-1162; it reads QKLPLNGTVF…QDYFQTTDAS (142 aa).

It belongs to the CarB family. As to quaternary structure, heterodimer composed of 2 chains; the small (or glutamine) chain promotes the hydrolysis of glutamine to ammonia, which is used by the large (or ammonia) chain to synthesize carbamoyl phosphate. The cofactor is Mg(2+). Requires Mn(2+) as cofactor.

The protein localises to the plastid. It is found in the chloroplast. It catalyses the reaction hydrogencarbonate + L-glutamine + 2 ATP + H2O = carbamoyl phosphate + L-glutamate + 2 ADP + phosphate + 2 H(+). It carries out the reaction hydrogencarbonate + NH4(+) + 2 ATP = carbamoyl phosphate + 2 ADP + phosphate + 2 H(+). It functions in the pathway amino-acid biosynthesis; L-arginine biosynthesis; carbamoyl phosphate from bicarbonate: step 1/1. Its function is as follows. Large subunit of the arginine-specific carbamoyl phosphate synthase (CPSase). CPSase catalyzes the formation of carbamoyl phosphate from the ammonia moiety of glutamine, hydrogencarbonate, and phosphate donated by ATP, constituting the first step of 2 biosynthetic pathways, one leading to arginine and/or urea and the other to pyrimidine nucleotides. The large subunit (synthetase) binds the substrates ammonia (free or transferred from glutamine from the small subunit), hydrogencarbonate and ATP and carries out an ATP-coupled ligase reaction, activating hydrogencarbonate by forming carboxy phosphate which reacts with ammonia to form carbamoyl phosphate. This chain is Carbamoyl phosphate synthase arginine-specific large chain, chloroplastic (CARB), found in Oryza sativa subsp. japonica (Rice).